The primary structure comprises 276 residues: ATP synthase subunit a (276 aa).

The next 6 helical transmembrane spans lie at 27–47 (ITML…LEVG), 61–81 (GQTF…SLAA), 120–140 (LPFI…GALL), 159–179 (DINT…YAGL), 225–245 (LVVA…LMAL), and 246–266 (GLFT…AYIH).

Belongs to the ATPase A chain family. In terms of assembly, F-type ATPases have 2 components, CF(1) - the catalytic core - and CF(0) - the membrane proton channel. CF(1) has five subunits: alpha(3), beta(3), gamma(1), delta(1), epsilon(1). CF(0) has four main subunits: a, b, b' and c.

Its subcellular location is the cellular thylakoid membrane. Its function is as follows. Key component of the proton channel; it plays a direct role in the translocation of protons across the membrane. This chain is ATP synthase subunit a, found in Synechocystis sp. (strain ATCC 27184 / PCC 6803 / Kazusa).